The sequence spans 253 residues: Spermatogenesis-associated protein 9 (253 aa).

The helical transmembrane segment at 144–166 (LTSIMCASYAALIYLTVCVNAVL) threads the bilayer. Residues 210–228 (AKPYRSLPEKPDSISDRPK) show a composition bias toward basic and acidic residues. The disordered stretch occupies residues 210–231 (AKPYRSLPEKPDSISDRPKLPA).

Its subcellular location is the membrane. In terms of biological role, may play at role in testicular development/spermatogenesis and may be an important factor in male infertility. This chain is Spermatogenesis-associated protein 9 (SPATA9), found in Bos taurus (Bovine).